The primary structure comprises 81 residues: MNDVFSTAQHKLDALGLRCPEPVMMVRKTVRQMAQGETLLIIADDPATTRDIPSFCEFMDHTLIASETMQTPYQYLIKKGL.

Catalysis depends on C19, which acts as the Cysteine persulfide intermediate.

The protein belongs to the sulfur carrier protein TusA family.

It is found in the cytoplasm. Functionally, sulfur carrier protein which probably makes part of a sulfur-relay system. This is Sulfur carrier protein TusA from Shewanella oneidensis (strain ATCC 700550 / JCM 31522 / CIP 106686 / LMG 19005 / NCIMB 14063 / MR-1).